The chain runs to 174 residues: Co-chaperone protein HscB homolog (174 aa).

The region spanning 2–74 is the J domain; that stretch reads NYFDLFNVVP…LRRAEHMLSL (73 aa).

It belongs to the HscB family. In terms of assembly, interacts with HscA and stimulates its ATPase activity.

Functionally, co-chaperone involved in the maturation of iron-sulfur cluster-containing proteins. Seems to help targeting proteins to be folded toward HscA. The sequence is that of Co-chaperone protein HscB homolog from Shewanella frigidimarina (strain NCIMB 400).